A 350-amino-acid chain; its full sequence is Protein-glutamate methylesterase/protein-glutamine glutaminase (350 aa).

Residues 5–122 (RVLSVDDSAL…REGMLAYSEM (118 aa)) enclose the Response regulatory domain. Aspartate 56 is modified (4-aspartylphosphate). The 187-residue stretch at 152–338 (LLSSEKLLVI…DLSQVVSQQM (187 aa)) folds into the CheB-type methylesterase domain. Residues serine 164, histidine 190, and aspartate 286 contribute to the active site.

It belongs to the CheB family. In terms of processing, phosphorylated by CheA. Phosphorylation of the N-terminal regulatory domain activates the methylesterase activity.

The protein resides in the cytoplasm. It catalyses the reaction [protein]-L-glutamate 5-O-methyl ester + H2O = L-glutamyl-[protein] + methanol + H(+). The catalysed reaction is L-glutaminyl-[protein] + H2O = L-glutamyl-[protein] + NH4(+). Its function is as follows. Involved in chemotaxis. Part of a chemotaxis signal transduction system that modulates chemotaxis in response to various stimuli. Catalyzes the demethylation of specific methylglutamate residues introduced into the chemoreceptors (methyl-accepting chemotaxis proteins or MCP) by CheR. Also mediates the irreversible deamidation of specific glutamine residues to glutamic acid. In Enterobacter cloacae, this protein is Protein-glutamate methylesterase/protein-glutamine glutaminase.